Here is a 515-residue protein sequence, read N- to C-terminus: MTTSIFTLTPGKITLSDLRDFYFGQMDVRLDDGTFEALQRAAESVERIVGRGEPVYGVNTGFGKLAKTRIPDDRLRDLQRNLVLSHAAGIGQPMPERVVRLILLLKANGLARGYSGVRPQIVQLLLDMLNQGVVPVIPEKGSVGASGDLAPLAHMSAVVIGEGEAFYQGKRLKGDEALKAAGLEPLVLGAKEGLALLNGTQASTALAIAALLDAERLFHAALITGGLTLDAARGTDAPFDPRLHELRGQKGQIECAAVYRALMQGSAIRASHLEDDERVQDPYCLRCQPQVMGACLDNLRQAARVLVIEANAVSDNPIHFPDTDEMISGGNFHAEPVAIAADLMAIAVSEVGAIAERRLALLVDAQMSGLPPFLVQDSGLNSGFMIAQVTAAALASENKTLAHPASVDSLPTSANQEDHVSMATFAARRVGDIVDNVRTIIAVEYLAAVQGLDFLAPLETSAPLLEVAKTLRKTVPFFAQDRLFTPDMEAARALIIDGALGSCVGSGVALPALEG.

The segment at residues 145–147 (ASG) is a cross-link (5-imidazolinone (Ala-Gly)). Position 146 is a 2,3-didehydroalanine (Ser) (S146).

This sequence belongs to the PAL/histidase family. In terms of processing, contains an active site 4-methylidene-imidazol-5-one (MIO), which is formed autocatalytically by cyclization and dehydration of residues Ala-Ser-Gly.

The protein resides in the cytoplasm. It catalyses the reaction L-histidine = trans-urocanate + NH4(+). It participates in amino-acid degradation; L-histidine degradation into L-glutamate; N-formimidoyl-L-glutamate from L-histidine: step 1/3. This Gluconobacter oxydans (strain 621H) (Gluconobacter suboxydans) protein is Histidine ammonia-lyase.